The primary structure comprises 105 residues: Putative toxin MazF8 (105 aa).

As to quaternary structure, forms a complex with cognate antitoxin MazE8.

Putative toxic component of a type II toxin-antitoxin (TA) system. Acts as an endoribonuclease. Neutralized by coexpression with cognate antitoxin MazE8. This is Putative toxin MazF8 (mazF8) from Mycobacterium tuberculosis (strain CDC 1551 / Oshkosh).